The following is a 142-amino-acid chain: Hemoglobin subunit alpha (142 aa).

Residue Ser1 is modified to N-acetylserine. One can recognise a Globin domain in the interval Ser1–Arg142. Position 59 (His59) interacts with O2. Residue His88 participates in heme b binding.

This sequence belongs to the globin family. As to quaternary structure, hb1 is a heterotetramer of two alpha chains and two beta-1 chains. Hb2 is a heterotetramer of two alpha chains and two beta-2 chains. As to expression, red blood cells.

Its function is as follows. Involved in oxygen transport from gills to the various peripheral tissues. The polypeptide is Hemoglobin subunit alpha (hba) (Pseudaphritis urvillii (Congolli)).